A 232-amino-acid polypeptide reads, in one-letter code: Large ribosomal subunit protein uL1 (232 aa).

The protein belongs to the universal ribosomal protein uL1 family. As to quaternary structure, part of the 50S ribosomal subunit.

Its function is as follows. Binds directly to 23S rRNA. The L1 stalk is quite mobile in the ribosome, and is involved in E site tRNA release. Protein L1 is also a translational repressor protein, it controls the translation of the L11 operon by binding to its mRNA. This Chlamydia trachomatis serovar L2 (strain ATCC VR-902B / DSM 19102 / 434/Bu) protein is Large ribosomal subunit protein uL1.